The chain runs to 883 residues: Leucine--tRNA ligase (883 aa).

The short motif at 43-53 is the 'HIGH' region element; that stretch reads PYPSGRIHIGH. The 'KMSKS' region motif lies at 630–634; it reads KMSKS. Lysine 633 serves as a coordination point for ATP.

It belongs to the class-I aminoacyl-tRNA synthetase family.

It localises to the cytoplasm. It carries out the reaction tRNA(Leu) + L-leucine + ATP = L-leucyl-tRNA(Leu) + AMP + diphosphate. In Nitrobacter winogradskyi (strain ATCC 25391 / DSM 10237 / CIP 104748 / NCIMB 11846 / Nb-255), this protein is Leucine--tRNA ligase.